The following is a 209-amino-acid chain: Chromophore lyase CpcT/CpeT 1 (209 aa).

Belongs to the CpcT/CpeT biliprotein lyase family.

In terms of biological role, covalently attaches a chromophore to Cys residue(s) of phycobiliproteins. The chain is Chromophore lyase CpcT/CpeT 1 from Trichodesmium erythraeum (strain IMS101).